We begin with the raw amino-acid sequence, 352 residues long: Cyclin-dependent kinase-like 1 (352 aa).

The region spanning 4–287 (YEKIGKIGEG…CEQLLQHPYF (284 aa)) is the Protein kinase domain. Residues 10–18 (IGEGSYGVV) and Lys-33 each bind ATP. The short motif at 45 to 51 (KKIALRE) is the [NKR]KIAxRE element. Asp-126 acts as the Proton acceptor in catalysis.

The protein belongs to the protein kinase superfamily. CMGC Ser/Thr protein kinase family. CDC2/CDKX subfamily.

It localises to the cytoplasm. The protein localises to the nucleus. It carries out the reaction L-seryl-[protein] + ATP = O-phospho-L-seryl-[protein] + ADP + H(+). The enzyme catalyses L-threonyl-[protein] + ATP = O-phospho-L-threonyl-[protein] + ADP + H(+). The chain is Cyclin-dependent kinase-like 1 from Mus musculus (Mouse).